The chain runs to 155 residues: MIDITNESGSPSNEEGLVGLATFALDRLRIHPSSELSIILVDEETMEAYHEKFMGLPGPTDVLSFPMDEMRAPGDDEDPPSGLLGDIVLCPTVTARQAAENGRTPDGEAEYLLIHGLLHLLGHDHAEPGEKRVMFRLNDEIIAAWDDHREQTGQR.

The disordered stretch occupies residues Ser64–Leu84. Zn(2+)-binding residues include His115, His119, and His125.

The protein belongs to the endoribonuclease YbeY family. Zn(2+) serves as cofactor.

The protein resides in the cytoplasm. Its function is as follows. Single strand-specific metallo-endoribonuclease involved in late-stage 70S ribosome quality control and in maturation of the 3' terminus of the 16S rRNA. The chain is Endoribonuclease YbeY from Cutibacterium acnes (strain DSM 16379 / KPA171202) (Propionibacterium acnes).